The following is a 373-amino-acid chain: Dual-specificity RNA methyltransferase RlmN (373 aa).

E94 (proton acceptor) is an active-site residue. The region spanning 100–339 is the Radical SAM core domain; the sequence is EDDRATLCVS…VIVRKTRGDD (240 aa). A disulfide bridge connects residues C107 and C344. C114, C118, and C121 together coordinate [4Fe-4S] cluster. Residues 168 to 169, S200, 222 to 224, and N301 each bind S-adenosyl-L-methionine; these read GE and SIH. C344 functions as the S-methylcysteine intermediate in the catalytic mechanism.

It belongs to the radical SAM superfamily. RlmN family. [4Fe-4S] cluster is required as a cofactor.

It localises to the cytoplasm. The catalysed reaction is adenosine(2503) in 23S rRNA + 2 reduced [2Fe-2S]-[ferredoxin] + 2 S-adenosyl-L-methionine = 2-methyladenosine(2503) in 23S rRNA + 5'-deoxyadenosine + L-methionine + 2 oxidized [2Fe-2S]-[ferredoxin] + S-adenosyl-L-homocysteine. The enzyme catalyses adenosine(37) in tRNA + 2 reduced [2Fe-2S]-[ferredoxin] + 2 S-adenosyl-L-methionine = 2-methyladenosine(37) in tRNA + 5'-deoxyadenosine + L-methionine + 2 oxidized [2Fe-2S]-[ferredoxin] + S-adenosyl-L-homocysteine. In terms of biological role, specifically methylates position 2 of adenine 2503 in 23S rRNA and position 2 of adenine 37 in tRNAs. m2A2503 modification seems to play a crucial role in the proofreading step occurring at the peptidyl transferase center and thus would serve to optimize ribosomal fidelity. The protein is Dual-specificity RNA methyltransferase RlmN of Shewanella amazonensis (strain ATCC BAA-1098 / SB2B).